The chain runs to 455 residues: NADH-quinone oxidoreductase subunit N (455 aa).

Transmembrane regions (helical) follow at residues 25–45 (AIVP…ISEY), 61–81 (FSVA…ALSH), 99–119 (VFLL…MFFL), 149–169 (FLMG…IYGA), 193–213 (IGIV…PFHF), 257–277 (IQII…IMAL), 285–305 (MFAF…LLTS), 312–332 (LYYA…VMYV), 355–375 (AGIL…SGFF), 391–411 (IVVF…FKII), and 432–452 (IVAV…NVVL).

Belongs to the complex I subunit 2 family. In terms of assembly, NDH-1 is composed of 14 different subunits. Subunits NuoA, H, J, K, L, M, N constitute the membrane sector of the complex.

Its subcellular location is the cell inner membrane. The enzyme catalyses a quinone + NADH + 5 H(+)(in) = a quinol + NAD(+) + 4 H(+)(out). NDH-1 shuttles electrons from NADH, via FMN and iron-sulfur (Fe-S) centers, to quinones in the respiratory chain. The immediate electron acceptor for the enzyme in this species is believed to be a menaquinone. Couples the redox reaction to proton translocation (for every two electrons transferred, four hydrogen ions are translocated across the cytoplasmic membrane), and thus conserves the redox energy in a proton gradient. The sequence is that of NADH-quinone oxidoreductase subunit N from Flavobacterium psychrophilum (strain ATCC 49511 / DSM 21280 / CIP 103535 / JIP02/86).